The sequence spans 221 residues: Ribonuclease T (221 aa).

The Exonuclease domain occupies 20–194 (VVIDVETAGF…YDTERTAELF (175 aa)). Residues aspartate 23, glutamate 25, histidine 181, and aspartate 186 each contribute to the Mg(2+) site. Residue histidine 181 is the Proton donor/acceptor of the active site.

This sequence belongs to the RNase T family. In terms of assembly, homodimer. The cofactor is Mg(2+).

Trims short 3' overhangs of a variety of RNA species, leaving a one or two nucleotide 3' overhang. Responsible for the end-turnover of tRNA: specifically removes the terminal AMP residue from uncharged tRNA (tRNA-C-C-A). Also appears to be involved in tRNA biosynthesis. This is Ribonuclease T from Shewanella frigidimarina (strain NCIMB 400).